Reading from the N-terminus, the 96-residue chain is ASNSD1 upstream open reading frame protein (96 aa).

Residues 1–10 (MPSRGTRPED) are compositionally biased toward basic and acidic residues. The interval 1 to 28 (MPSRGTRPEDSSVLIPTDNSTPHKEDLS) is disordered. Residues 23-96 (HKEDLSSKIK…ENLDKTKIKK (74 aa)) are a coiled coil.

As to quaternary structure, component of the PAQosome complex which is responsible for the biogenesis of several protein complexes and which consists of R2TP complex members RUVBL1, RUVBL2, RPAP3 and PIH1D1, URI complex members PFDN2, PFDN6, PDRG1, UXT and URI1 as well as ASDURF, POLR2E and DNAAF10/WDR92.

The protein localises to the cytoplasm. In Homo sapiens (Human), this protein is ASNSD1 upstream open reading frame protein.